The chain runs to 392 residues: uncharacterized protein (392 aa).

This sequence belongs to the glycosyltransferase group 1 family. Glycosyltransferase 4 subfamily.

This is an uncharacterized protein from Methanocaldococcus jannaschii (strain ATCC 43067 / DSM 2661 / JAL-1 / JCM 10045 / NBRC 100440) (Methanococcus jannaschii).